A 265-amino-acid chain; its full sequence is Mlc titration factor A (265 aa).

The Zn(2+) site is built by His111, His148, His152, and Glu211.

Belongs to the MtfA family. As to quaternary structure, monomer in solution. Interacts with Mlc. Zn(2+) serves as cofactor.

It localises to the cytoplasm. Its activity is regulated as follows. Association between Mlc and MtfA may induce structural changes that activate the peptidase activity of MtfA while inactivating the DNA-binding ability of Mlc. The aminopeptidase activity is partially inhibited by metal chelators such as EDTA and phenantroline, but not by inhibitors for serine-, aspartyl-, or cysteine-proteases. Functionally, involved in the modulation of the activity of the glucose-phosphotransferase system (glucose-PTS). Interacts with the transcriptional repressor Mlc, preventing its interaction with DNA and leading to the modulation of expression of genes regulated by Mlc, including ptsG, which encodes the PTS system glucose-specific EIICB component. In terms of biological role, shows zinc-dependent metallopeptidase activity. In vitro, can cleave several artificial substrates. The highest activity is observed for L-alanine fused to 4-nitroanilide (L-alanine-pNA). Shows lower activity towards proline-pNA and valine-pNA. The sequence is that of Mlc titration factor A from Klebsiella pneumoniae subsp. pneumoniae (strain ATCC 700721 / MGH 78578).